The primary structure comprises 312 residues: Pseudouridine-5'-phosphate glycosidase (312 aa).

E31 acts as the Proton donor in catalysis. The substrate site is built by K93 and V113. Residue D145 participates in Mn(2+) binding. 147–149 provides a ligand contact to substrate; the sequence is SAD. K166 functions as the Nucleophile in the catalytic mechanism.

It belongs to the pseudouridine-5'-phosphate glycosidase family. In terms of assembly, homotrimer. The cofactor is Mn(2+). Fe(2+) is required as a cofactor. Co(2+) serves as cofactor.

The enzyme catalyses D-ribose 5-phosphate + uracil = psi-UMP + H2O. With respect to regulation, inhibited by Zn(2+) and Ni(2+). Functionally, catalyzes the reversible cleavage of pseudouridine 5'-phosphate (PsiMP) to ribose 5-phosphate and uracil. Functions biologically in the cleavage direction, as part of a pseudouridine degradation pathway. The chain is Pseudouridine-5'-phosphate glycosidase from Escherichia coli (strain K12).